We begin with the raw amino-acid sequence, 430 residues long: Adenylosuccinate synthetase (430 aa).

Residues 12 to 18 (GDEGKGK) and 40 to 42 (GHT) each bind GTP. Asp13 acts as the Proton acceptor in catalysis. Mg(2+)-binding residues include Asp13 and Gly40. IMP is bound by residues 13-16 (DEGK), 38-41 (NAGH), Thr128, Arg142, Gln223, Thr238, and Arg302. The active-site Proton donor is the His41. 298–304 (TTTGRPR) contributes to the substrate binding site. GTP contacts are provided by residues Arg304, 330–332 (SID), and 412–414 (SVG).

It belongs to the adenylosuccinate synthetase family. In terms of assembly, homodimer. It depends on Mg(2+) as a cofactor.

It is found in the cytoplasm. It carries out the reaction IMP + L-aspartate + GTP = N(6)-(1,2-dicarboxyethyl)-AMP + GDP + phosphate + 2 H(+). Its pathway is purine metabolism; AMP biosynthesis via de novo pathway; AMP from IMP: step 1/2. In terms of biological role, plays an important role in the de novo pathway of purine nucleotide biosynthesis. Catalyzes the first committed step in the biosynthesis of AMP from IMP. The polypeptide is Adenylosuccinate synthetase (Streptococcus pyogenes serotype M1).